A 194-amino-acid polypeptide reads, in one-letter code: Adenylate kinase isoenzyme 1 (194 aa).

Methionine 1 is subject to N-acetylmethionine. An ATP-binding site is contributed by 18 to 23 (GSGKGT). Residue serine 38 is modified to Phosphoserine. Residues 38–67 (STGDLLRAEVSSGSARGKMLSEIMEKGQLV) are NMP. AMP-binding positions include threonine 39, arginine 44, 65-67 (QLV), 94-97 (GYPR), and glutamine 101. The tract at residues 131-141 (KRGETSGRVDD) is LID. Arginine 132 serves as a coordination point for ATP. Residues arginine 138 and arginine 149 each coordinate AMP. ATP is bound at residue glycine 177.

It belongs to the adenylate kinase family. AK1 subfamily. In terms of assembly, monomer. Requires Mg(2+) as cofactor.

Its subcellular location is the cytoplasm. The catalysed reaction is a ribonucleoside 5'-phosphate + ATP = a ribonucleoside 5'-diphosphate + ADP. The enzyme catalyses AMP + ATP = 2 ADP. It carries out the reaction dAMP + ATP = dADP + ADP. It catalyses the reaction dATP + AMP = dADP + ADP. The catalysed reaction is dAMP + dATP = 2 dADP. The enzyme catalyses a 2'-deoxyribonucleoside 5'-diphosphate + ATP = a 2'-deoxyribonucleoside 5'-triphosphate + ADP. It carries out the reaction a ribonucleoside 5'-diphosphate + ATP = a ribonucleoside 5'-triphosphate + ADP. It catalyses the reaction CDP + GTP = CTP + GDP. The catalysed reaction is GDP + ATP = GTP + ADP. The enzyme catalyses UDP + ATP = UTP + ADP. It carries out the reaction GTP + UDP = UTP + GDP. It catalyses the reaction dTDP + GTP = dTTP + GDP. The catalysed reaction is dCDP + GTP = dCTP + GDP. The enzyme catalyses dGDP + ATP = dGTP + ADP. It carries out the reaction dADP + GTP = dATP + GDP. It catalyses the reaction thiamine diphosphate + ADP = thiamine triphosphate + AMP. In terms of biological role, catalyzes the reversible transfer of the terminal phosphate group between ATP and AMP. Also displays broad nucleoside diphosphate kinase activity. Plays an important role in cellular energy homeostasis and in adenine nucleotide metabolism. Also catalyzes at a very low rate the synthesis of thiamine triphosphate (ThTP) from thiamine diphosphate (ThDP) and ADP. This Bos taurus (Bovine) protein is Adenylate kinase isoenzyme 1.